The primary structure comprises 461 residues: Cysteine--tRNA ligase (461 aa).

A Zn(2+)-binding site is contributed by cysteine 28. The 'HIGH' region signature appears at 30–40; sequence ITIYDLCHIGH. Zn(2+) contacts are provided by cysteine 209, histidine 234, and glutamate 238. The 'KMSKS' region motif lies at 266 to 270; sequence KMSKS. Lysine 269 serves as a coordination point for ATP.

Belongs to the class-I aminoacyl-tRNA synthetase family. In terms of assembly, monomer. The cofactor is Zn(2+).

It localises to the cytoplasm. The enzyme catalyses tRNA(Cys) + L-cysteine + ATP = L-cysteinyl-tRNA(Cys) + AMP + diphosphate. The polypeptide is Cysteine--tRNA ligase (Photorhabdus laumondii subsp. laumondii (strain DSM 15139 / CIP 105565 / TT01) (Photorhabdus luminescens subsp. laumondii)).